A 603-amino-acid polypeptide reads, in one-letter code: Elongation factor 4 (603 aa).

The tr-type G domain maps to 6 to 188; the sequence is AHIRNFCIIA…SVVQNVPPPS (183 aa). GTP contacts are provided by residues 18 to 23 and 135 to 138; these read DHGKST and NKID.

Belongs to the TRAFAC class translation factor GTPase superfamily. Classic translation factor GTPase family. LepA subfamily.

It is found in the cell inner membrane. It carries out the reaction GTP + H2O = GDP + phosphate + H(+). In terms of biological role, required for accurate and efficient protein synthesis under certain stress conditions. May act as a fidelity factor of the translation reaction, by catalyzing a one-codon backward translocation of tRNAs on improperly translocated ribosomes. Back-translocation proceeds from a post-translocation (POST) complex to a pre-translocation (PRE) complex, thus giving elongation factor G a second chance to translocate the tRNAs correctly. Binds to ribosomes in a GTP-dependent manner. In Myxococcus xanthus (strain DK1622), this protein is Elongation factor 4.